Reading from the N-terminus, the 299-residue chain is Formamidopyrimidine-DNA glycosylase (299 aa).

The active-site Schiff-base intermediate with DNA is Pro-2. The active-site Proton donor is Glu-3. Lys-58 functions as the Proton donor; for beta-elimination activity in the catalytic mechanism. The DNA site is built by His-106, Arg-125, and Lys-168. The FPG-type zinc finger occupies Arg-259–Val-295. The active-site Proton donor; for delta-elimination activity is Arg-285.

The protein belongs to the FPG family. Monomer. Zn(2+) is required as a cofactor.

The catalysed reaction is Hydrolysis of DNA containing ring-opened 7-methylguanine residues, releasing 2,6-diamino-4-hydroxy-5-(N-methyl)formamidopyrimidine.. The enzyme catalyses 2'-deoxyribonucleotide-(2'-deoxyribose 5'-phosphate)-2'-deoxyribonucleotide-DNA = a 3'-end 2'-deoxyribonucleotide-(2,3-dehydro-2,3-deoxyribose 5'-phosphate)-DNA + a 5'-end 5'-phospho-2'-deoxyribonucleoside-DNA + H(+). In terms of biological role, involved in base excision repair of DNA damaged by oxidation or by mutagenic agents. Acts as a DNA glycosylase that recognizes and removes damaged bases. Has a preference for oxidized purines, such as 7,8-dihydro-8-oxoguanine (8-oxoG). Has AP (apurinic/apyrimidinic) lyase activity and introduces nicks in the DNA strand. Cleaves the DNA backbone by beta-delta elimination to generate a single-strand break at the site of the removed base with both 3'- and 5'-phosphates. In Methylorubrum extorquens (strain CM4 / NCIMB 13688) (Methylobacterium extorquens), this protein is Formamidopyrimidine-DNA glycosylase.